Reading from the N-terminus, the 162-residue chain is NADH-quinone oxidoreductase subunit I 1 (162 aa).

4Fe-4S ferredoxin-type domains lie at 44–74 (LRTY…VQAA) and 90–119 (YKYQ…LTQE). [4Fe-4S] cluster is bound by residues Cys54, Cys57, Cys60, Cys64, Cys99, Cys102, Cys105, and Cys109.

It belongs to the complex I 23 kDa subunit family. In terms of assembly, NDH-1 is composed of 14 different subunits. Subunits NuoA, H, J, K, L, M, N constitute the membrane sector of the complex. [4Fe-4S] cluster serves as cofactor.

Its subcellular location is the cell membrane. It catalyses the reaction a quinone + NADH + 5 H(+)(in) = a quinol + NAD(+) + 4 H(+)(out). NDH-1 shuttles electrons from NADH, via FMN and iron-sulfur (Fe-S) centers, to quinones in the respiratory chain. The immediate electron acceptor for the enzyme in this species is believed to be ubiquinone. Couples the redox reaction to proton translocation (for every two electrons transferred, four hydrogen ions are translocated across the cytoplasmic membrane), and thus conserves the redox energy in a proton gradient. The chain is NADH-quinone oxidoreductase subunit I 1 from Symbiobacterium thermophilum (strain DSM 24528 / JCM 14929 / IAM 14863 / T).